Consider the following 479-residue polypeptide: Glutamate--tRNA ligase (479 aa).

The short motif at P9 to T19 is the 'HIGH' region element. The 'KMSKS' region signature appears at K243–R247. Residue K246 coordinates ATP.

It belongs to the class-I aminoacyl-tRNA synthetase family. Glutamate--tRNA ligase type 1 subfamily. As to quaternary structure, monomer.

The protein localises to the cytoplasm. It catalyses the reaction tRNA(Glu) + L-glutamate + ATP = L-glutamyl-tRNA(Glu) + AMP + diphosphate. Catalyzes the attachment of glutamate to tRNA(Glu) in a two-step reaction: glutamate is first activated by ATP to form Glu-AMP and then transferred to the acceptor end of tRNA(Glu). The protein is Glutamate--tRNA ligase of Synechococcus sp. (strain JA-2-3B'a(2-13)) (Cyanobacteria bacterium Yellowstone B-Prime).